A 168-amino-acid polypeptide reads, in one-letter code: Cell division inhibitor SulA (168 aa).

The interval 105–111 (ALLTGNY) is ftsZ binding. Residues 161–168 (KIHSTLYH) are lon protease binding.

The protein belongs to the SulA family. In terms of assembly, interacts with FtsZ. Post-translationally, is rapidly cleaved and degraded by the Lon protease once DNA damage is repaired.

In terms of biological role, component of the SOS system and an inhibitor of cell division. Accumulation of SulA causes rapid cessation of cell division and the appearance of long, non-septate filaments. In the presence of GTP, binds a polymerization-competent form of FtsZ in a 1:1 ratio, thus inhibiting FtsZ polymerization and therefore preventing it from participating in the assembly of the Z ring. This mechanism prevents the premature segregation of damaged DNA to daughter cells during cell division. This is Cell division inhibitor SulA from Pectobacterium carotovorum subsp. carotovorum (strain PC1).